Here is a 458-residue protein sequence, read N- to C-terminus: Argininosuccinate lyase (458 aa).

The protein belongs to the lyase 1 family. Argininosuccinate lyase subfamily.

Its subcellular location is the cytoplasm. It catalyses the reaction 2-(N(omega)-L-arginino)succinate = fumarate + L-arginine. Its pathway is amino-acid biosynthesis; L-arginine biosynthesis; L-arginine from L-ornithine and carbamoyl phosphate: step 3/3. The protein is Argininosuccinate lyase of Haemophilus ducreyi (strain 35000HP / ATCC 700724).